Reading from the N-terminus, the 543-residue chain is MLKKNDIVEVEIVDLTHEGAGVAKVDGLVFFVENALPSEKILMRVLKVNKKIGFGKVEKYLVQSPHRNQDLDLAYLRSGIADLGHLSYPEQLKFKTKQVKDSLYKIAGIADVEVAETLGMEHPVKYRNKAQVPVRRVNGVLETGFFRKNSHNLMPLEDFFIQDPVIDQVVVALRDLLRRFDLKPYDEKEQSGLIRNLVVRRGHYSGQIMVVLVTTRPKVFRVDQLIEQVIKQFPEIVSVMQNINDQNTNAIFGKEWRTLYGQDYITDQMLGNDFQIAGLAFYQVNTEMAEKLYQTAIDFAELKKDDVVIDAYSGIGTIGLSVAKHVKEVYGVELIPEAVENSKKNAQLNNISNAHYVCDTAENAMKNWLKDGIQPTVILVDPPRKGLTESFIKASAQTGADRIAYISCNVATMARDIKLYQELGYELKKVQPVDLFPQTHHVETVALLSKLDVDKHISVEIELDEMDLTSAESKATYAQIKEYVWNKFELKVSTLYIAQIKKKCGIELREHYNKSKKDKQIIPQCTPEKEEAIMDALRHFKMI.

One can recognise a TRAM domain in the interval M1–K59. Positions 283, 312, 333, and 381 each coordinate S-adenosyl-L-methionine. Catalysis depends on C408, which acts as the Nucleophile.

Belongs to the class I-like SAM-binding methyltransferase superfamily. RNA M5U methyltransferase family.

This is an uncharacterized protein from Streptococcus pneumoniae (strain ATCC BAA-255 / R6).